We begin with the raw amino-acid sequence, 436 residues long: ATP-dependent RNA helicase SUB2 (436 aa).

The span at 1-16 (MSAEEDLIDYSDEELN) shows a compositional bias: acidic residues. Positions 1-33 (MSAEEDLIDYSDEELNTNETAAPAADSNGKKGE) are disordered. The Q motif motif lies at 52–80 (TGFRDFLLKPELLRAIGDCGFEHPSEVQQ). Residues 83-258 (IPQAMLGGDI…KKFMQNPTEH (176 aa)) enclose the Helicase ATP-binding domain. 96–103 (AKSGLGKT) is a binding site for ATP. The DEAD box signature appears at 205–208 (DECD). Residues 270 to 431 (GLQQYFVALE…EFPKDGIDAS (162 aa)) enclose the Helicase C-terminal domain.

This sequence belongs to the DEAD box helicase family. DECD subfamily.

The protein resides in the nucleus. It catalyses the reaction ATP + H2O = ADP + phosphate + H(+). Its function is as follows. ATP-binding RNA helicase involved in transcription elongation and required for the export of mRNA out of the nucleus. SUB2 also plays a role in pre-mRNA splicing and spliceosome assembly. May be involved in rDNA and telomeric silencing, and maintenance of genome integrity. This chain is ATP-dependent RNA helicase SUB2 (SUB2), found in Pyricularia oryzae (strain 70-15 / ATCC MYA-4617 / FGSC 8958) (Rice blast fungus).